The chain runs to 457 residues: Cysteine--tRNA ligase (457 aa).

Cysteine 28 serves as a coordination point for Zn(2+). The 'HIGH' region signature appears at 30–40 (MTVYDYCHLGH). Positions 209, 234, and 238 each coordinate Zn(2+). A 'KMSKS' region motif is present at residues 266 to 270 (KMSKS). Lysine 269 is an ATP binding site.

This sequence belongs to the class-I aminoacyl-tRNA synthetase family. Monomer. Zn(2+) serves as cofactor.

The protein localises to the cytoplasm. The catalysed reaction is tRNA(Cys) + L-cysteine + ATP = L-cysteinyl-tRNA(Cys) + AMP + diphosphate. The protein is Cysteine--tRNA ligase of Laribacter hongkongensis (strain HLHK9).